The following is a 381-amino-acid chain: Chaperone protein DnaJ (381 aa).

Residues 5–70 (DYYEVLGVSR…DKKAAYDRYG (66 aa)) enclose the J domain. The segment at 140 to 218 (GVQKTINVPA…CHGAGRVEKE (79 aa)) adopts a CR-type zinc-finger fold. The Zn(2+) site is built by cysteine 153, cysteine 156, cysteine 170, cysteine 173, cysteine 192, cysteine 195, cysteine 206, and cysteine 209. CXXCXGXG motif repeat units follow at residues 153 to 160 (CDACKGTG), 170 to 177 (CPTCSGMG), 192 to 199 (CPTCNGMG), and 206 to 213 (CKVCHGAG).

The protein belongs to the DnaJ family. As to quaternary structure, homodimer. It depends on Zn(2+) as a cofactor.

It is found in the cytoplasm. In terms of biological role, participates actively in the response to hyperosmotic and heat shock by preventing the aggregation of stress-denatured proteins and by disaggregating proteins, also in an autonomous, DnaK-independent fashion. Unfolded proteins bind initially to DnaJ; upon interaction with the DnaJ-bound protein, DnaK hydrolyzes its bound ATP, resulting in the formation of a stable complex. GrpE releases ADP from DnaK; ATP binding to DnaK triggers the release of the substrate protein, thus completing the reaction cycle. Several rounds of ATP-dependent interactions between DnaJ, DnaK and GrpE are required for fully efficient folding. Also involved, together with DnaK and GrpE, in the DNA replication of plasmids through activation of initiation proteins. The polypeptide is Chaperone protein DnaJ (Cereibacter sphaeroides (strain KD131 / KCTC 12085) (Rhodobacter sphaeroides)).